The sequence spans 271 residues: 3-methyl-2-oxobutanoate hydroxymethyltransferase (271 aa).

Mg(2+) is bound by residues Asp-53 and Asp-92. Residues 53-54, Asp-92, and Lys-120 contribute to the 3-methyl-2-oxobutanoate site; that span reads DS. Glu-122 is a binding site for Mg(2+). Glu-189 serves as the catalytic Proton acceptor.

Belongs to the PanB family. As to quaternary structure, homodecamer; pentamer of dimers. It depends on Mg(2+) as a cofactor.

The protein resides in the cytoplasm. The enzyme catalyses 3-methyl-2-oxobutanoate + (6R)-5,10-methylene-5,6,7,8-tetrahydrofolate + H2O = 2-dehydropantoate + (6S)-5,6,7,8-tetrahydrofolate. It participates in cofactor biosynthesis; (R)-pantothenate biosynthesis; (R)-pantoate from 3-methyl-2-oxobutanoate: step 1/2. Its function is as follows. Catalyzes the reversible reaction in which hydroxymethyl group from 5,10-methylenetetrahydrofolate is transferred onto alpha-ketoisovalerate to form ketopantoate. The sequence is that of 3-methyl-2-oxobutanoate hydroxymethyltransferase from Paraburkholderia phytofirmans (strain DSM 17436 / LMG 22146 / PsJN) (Burkholderia phytofirmans).